A 281-amino-acid polypeptide reads, in one-letter code: Trypsin zeta (281 aa).

The signal sequence occupies residues 1–23 (MSSSSWLGCLLAVLLSALALSQG). Positions 24 to 39 (LPLLEDLDENSFPDGR) are cleaved as a propeptide — activation peptide. Residues 40–279 (IVGGYVTDIA…LRPWIDAVRA (240 aa)) form the Peptidase S1 domain. Cysteine 73 and cysteine 89 are oxidised to a cystine. Catalysis depends on charge relay system residues histidine 88 and aspartate 135. 2 disulfide bridges follow: cysteine 199/cysteine 219 and cysteine 231/cysteine 255. The Charge relay system role is filled by serine 235.

The protein belongs to the peptidase S1 family.

Its subcellular location is the secreted. The protein localises to the extracellular space. It carries out the reaction Preferential cleavage: Arg-|-Xaa, Lys-|-Xaa.. This Drosophila erecta (Fruit fly) protein is Trypsin zeta (zetaTry).